A 363-amino-acid polypeptide reads, in one-letter code: Adenosine deaminase (363 aa).

Zn(2+)-binding residues include His-42 and His-44. Residues 44 to 46, Asp-172, and Gly-201 each bind a purine D-ribonucleoside; that span reads HLD. The segment at 170–184 is gating helix loop; regulates binding affinity for substrates and thus substrate selectivity; the sequence is IGDTGHEAANIKASA. Residue His-226 coordinates Zn(2+). The a purine D-ribonucleoside site is built by Glu-229, His-253, and Asp-310. A Zn(2+)-binding site is contributed by Asp-310.

This sequence belongs to the metallo-dependent hydrolases superfamily. Adenosine and AMP deaminases family. It depends on Zn(2+) as a cofactor.

The catalysed reaction is adenosine + H2O + H(+) = inosine + NH4(+). It carries out the reaction S-methyl-5'-thioadenosine + H2O + H(+) = S-methyl-5'-thioinosine + NH4(+). Its pathway is purine metabolism; purine nucleoside salvage. Inhibited by coformycin and methylthiocoformycin (MT-coformycin). In terms of biological role, catalyzes the hydrolytic deamination of adenosine to produce inosine. Unlike mammalian adenosine deaminases, also catalyzes the deamination of 5'-methylthioadenosine (MTA), a by-product of polyamine biosynthesis, to produce 5'-methylthioinosine (MTI). Plays an essential role in the purine salvage pathway which allows the parasite to use host cell purines for the synthesis of nucleic acids. The polypeptide is Adenosine deaminase (Plasmodium cynomolgi (strain B)).